The following is a 449-amino-acid chain: Methionine aminopeptidase 2-2 (449 aa).

The segment at 1–91 is disordered; the sequence is MAAQAAPELA…PRIPLTTLFP (91 aa). Polar residues predominate over residues 15–28; it reads NKNTGSAEASTVPA. Over residues 34-50 the composition is skewed to acidic residues; it reads DDAENEGDSDDDRDDEQ. Residues 61 to 75 are compositionally biased toward basic residues; the sequence is KKKKKKRPKKKKKTA. Position 199 (His-199) interacts with substrate. Positions 219, 230, and 299 each coordinate a divalent metal cation. His-307 provides a ligand contact to substrate. A divalent metal cation-binding residues include Glu-335 and Glu-430.

The protein belongs to the peptidase M24A family. Methionine aminopeptidase eukaryotic type 2 subfamily. It depends on Co(2+) as a cofactor. The cofactor is Zn(2+). Mn(2+) serves as cofactor. Requires Fe(2+) as cofactor.

It localises to the cytoplasm. The enzyme catalyses Release of N-terminal amino acids, preferentially methionine, from peptides and arylamides.. Cotranslationally removes the N-terminal methionine from nascent proteins. The N-terminal methionine is often cleaved when the second residue in the primary sequence is small and uncharged (Met-Ala-, Cys, Gly, Pro, Ser, Thr, or Val). This chain is Methionine aminopeptidase 2-2, found in Arthroderma gypseum (strain ATCC MYA-4604 / CBS 118893) (Microsporum gypseum).